The primary structure comprises 188 residues: Trafficking protein particle complex subunit 5 (188 aa).

Residue serine 10 is modified to Phosphoserine.

It belongs to the TRAPP small subunits family. BET3 subfamily. In terms of assembly, component of the multisubunit TRAPP (transport protein particle) complex, which includes at least TRAPPC2, TRAPPC2L, TRAPPC3, TRAPPC3L, TRAPPC4, TRAPPC5, TRAPPC8, TRAPPC9, TRAPPC10, TRAPPC11 and TRAPPC12.

It localises to the golgi apparatus. Its subcellular location is the cis-Golgi network. It is found in the endoplasmic reticulum. Its function is as follows. May play a role in vesicular transport from endoplasmic reticulum to Golgi. The sequence is that of Trafficking protein particle complex subunit 5 (TRAPPC5) from Homo sapiens (Human).